A 341-amino-acid chain; its full sequence is UDP-N-acetylenolpyruvoylglucosamine reductase (341 aa).

The 173-residue stretch at 19 to 191 (MAVRAAHFCQ…TAVRFRLSRR (173 aa)) folds into the FAD-binding PCMH-type domain. Residue R167 is part of the active site. S241 serves as the catalytic Proton donor. E337 is an active-site residue.

The protein belongs to the MurB family. FAD is required as a cofactor.

The protein resides in the cytoplasm. It carries out the reaction UDP-N-acetyl-alpha-D-muramate + NADP(+) = UDP-N-acetyl-3-O-(1-carboxyvinyl)-alpha-D-glucosamine + NADPH + H(+). It participates in cell wall biogenesis; peptidoglycan biosynthesis. Its function is as follows. Cell wall formation. This is UDP-N-acetylenolpyruvoylglucosamine reductase from Chromobacterium violaceum (strain ATCC 12472 / DSM 30191 / JCM 1249 / CCUG 213 / NBRC 12614 / NCIMB 9131 / NCTC 9757 / MK).